We begin with the raw amino-acid sequence, 431 residues long: Enolase (431 aa).

Glutamine 168 serves as a coordination point for (2R)-2-phosphoglycerate. Glutamate 210 acts as the Proton donor in catalysis. Mg(2+) is bound by residues aspartate 247, glutamate 291, and aspartate 318. The (2R)-2-phosphoglycerate site is built by lysine 343, arginine 372, serine 373, and lysine 394. Lysine 343 serves as the catalytic Proton acceptor.

Belongs to the enolase family. As to quaternary structure, component of the RNA degradosome, a multiprotein complex involved in RNA processing and mRNA degradation. Mg(2+) is required as a cofactor.

It localises to the cytoplasm. The protein localises to the secreted. It is found in the cell surface. The catalysed reaction is (2R)-2-phosphoglycerate = phosphoenolpyruvate + H2O. It participates in carbohydrate degradation; glycolysis; pyruvate from D-glyceraldehyde 3-phosphate: step 4/5. Its function is as follows. Catalyzes the reversible conversion of 2-phosphoglycerate (2-PG) into phosphoenolpyruvate (PEP). It is essential for the degradation of carbohydrates via glycolysis. The sequence is that of Enolase from Acinetobacter baumannii (strain AYE).